The sequence spans 245 residues: tRNA pseudouridine synthase A (245 aa).

Residue D52 is the Nucleophile of the active site. Y111 is a substrate binding site.

This sequence belongs to the tRNA pseudouridine synthase TruA family. As to quaternary structure, homodimer.

It carries out the reaction uridine(38/39/40) in tRNA = pseudouridine(38/39/40) in tRNA. Functionally, formation of pseudouridine at positions 38, 39 and 40 in the anticodon stem and loop of transfer RNAs. The sequence is that of tRNA pseudouridine synthase A from Bradyrhizobium diazoefficiens (strain JCM 10833 / BCRC 13528 / IAM 13628 / NBRC 14792 / USDA 110).